Reading from the N-terminus, the 968-residue chain is MSAQYQRFLKVLEKWPAEKSKVGSGEWTAEPAIKMSGAKIISGTAVAKSIREELRNEVTAMSKQLADFVPGLRIVQVGGREDSNVYIRMKIKAATEIGIDAAHVQLPRSITEVELLDKINDLNEDPRVHGIIVQMPLDCDTPIDSHRITDAVSPEKDVDGLHTVNEGRLAIGDLGGFLPCTPWGCLELIRRSGVEIAGARAVVLGRSKIVGTPAAELLKWANATVTVCHSKTRNLEEITRSADILVVGIGVAEMVKGSWIKPGAVVIDCGINVKPDASKASGSKLVGDVDYAEALQVAGHLTPVPGGVGPMTVAMLMKNTVRSAARFLERLAKSQWALQTLPLKPQRPVPSDIVIARAQKPKDIAVLAKEIGLEAREVSLYGNKKAKISLSVLERLKDKEVGHYVVVAGMTPTPLGEGKTTTLMGLVQALGAHKLRNTMAALRQPSQGPTFGIKGGAAGGGYAQVIPMEEFNLHLTGDIHAVSAANNLLAAQLDTRIFHENTQKDKALYDRLVPAIKGQRKFSPIQLRRLQKLGITKTDPDTLTADEYGPFARLDIDPDTIMWERVVDINDRYLRTITVGQSPTEKGISRETRFSISVASEIMAVLALSRSLEDMKQRLADMVVAFDKRGKPVTADDLGVTGALAVLLKDALEPNLMQSLEGTPVLVHAGPFANIAHGCNSIIADEVGLKLVGKNGFVCTEAGFGSDIGMEKFCNIKCRTSGRKPNAMVLVATVRAIKMHGGGAPVTPGAPLNKQYTEENLELVQKGLPNLLQHIENGKAFGMPVVVSLNAHSADTPAEHELVKKAALEAGAFAAVVSTHWADGGAGAVQLADAVIKACEQGNQFRLLYDLELPLVDKMNKIATTMYGAGKVVLSPAAEEKVKRLTDAGFGNLPICMSKVSGSFTGDAKIKGAPKGFTLDVEDVYVSAGAGFVVAMCGEVTKMPGLPTRPAIYDIDLNTETGEIEGLF.

The methylenetetrahydrofolate dehydrogenase and cyclohydrolase stretch occupies residues methionine 1–leucine 338. Substrate contacts are provided by residues tyrosine 86–lysine 90 and valine 133–methionine 135. NADP(+)-binding positions include glycine 205 to serine 207 and serine 230. A substrate-binding site is contributed by proline 305 to glycine 309. The formyltetrahydrofolate synthetase stretch occupies residues glutamine 339–phenylalanine 968. Residue threonine 413 to threonine 420 participates in ATP binding.

This sequence in the N-terminal section; belongs to the tetrahydrofolate dehydrogenase/cyclohydrolase family. In the C-terminal section; belongs to the formate--tetrahydrofolate ligase family. As to quaternary structure, homodimer. Present in all tissues.

Its subcellular location is the cytoplasm. The catalysed reaction is (6R)-5,10-methylene-5,6,7,8-tetrahydrofolate + NADP(+) = (6R)-5,10-methenyltetrahydrofolate + NADPH. The enzyme catalyses (6R)-5,10-methenyltetrahydrofolate + H2O = (6R)-10-formyltetrahydrofolate + H(+). It carries out the reaction (6S)-5,6,7,8-tetrahydrofolate + formate + ATP = (6R)-10-formyltetrahydrofolate + ADP + phosphate. The protein operates within one-carbon metabolism; tetrahydrofolate interconversion. This is C-1-tetrahydrofolate synthase, cytoplasmic (pug) from Drosophila melanogaster (Fruit fly).